Consider the following 180-residue polypeptide: Shikimate kinase (180 aa).

14–19 contacts ATP; it reads GAGKST. Serine 18 contacts Mg(2+). 3 residues coordinate substrate: aspartate 36, arginine 60, and glycine 82. Arginine 120 contacts ATP. A substrate-binding site is contributed by arginine 139.

It belongs to the shikimate kinase family. As to quaternary structure, monomer. It depends on Mg(2+) as a cofactor.

The protein resides in the cytoplasm. The catalysed reaction is shikimate + ATP = 3-phosphoshikimate + ADP + H(+). It participates in metabolic intermediate biosynthesis; chorismate biosynthesis; chorismate from D-erythrose 4-phosphate and phosphoenolpyruvate: step 5/7. Functionally, catalyzes the specific phosphorylation of the 3-hydroxyl group of shikimic acid using ATP as a cosubstrate. The protein is Shikimate kinase of Chromohalobacter salexigens (strain ATCC BAA-138 / DSM 3043 / CIP 106854 / NCIMB 13768 / 1H11).